Here is a 38-residue protein sequence, read N- to C-terminus: Cytochrome b6-f complex subunit 5 (38 aa).

A helical membrane pass occupies residues leucine 5–alanine 25.

It belongs to the PetG family. In terms of assembly, the 4 large subunits of the cytochrome b6-f complex are cytochrome b6, subunit IV (17 kDa polypeptide, PetD), cytochrome f and the Rieske protein, while the 4 small subunits are PetG, PetL, PetM and PetN. The complex functions as a dimer.

The protein localises to the plastid. It is found in the chloroplast thylakoid membrane. In terms of biological role, component of the cytochrome b6-f complex, which mediates electron transfer between photosystem II (PSII) and photosystem I (PSI), cyclic electron flow around PSI, and state transitions. PetG is required for either the stability or assembly of the cytochrome b6-f complex. The chain is Cytochrome b6-f complex subunit 5 from Adiantum capillus-veneris (Maidenhair fern).